Consider the following 765-residue polypeptide: Protein transport protein Sec23A (765 aa).

Residues Cys61, Cys66, Cys85, and Cys88 each contribute to the Zn(2+) site. A Gelsolin-like repeat occupies 632-718 (PEPVLLDSSS…EHGGSQARFL (87 aa)).

This sequence belongs to the SEC23/SEC24 family. SEC23 subfamily. As to quaternary structure, COPII is composed of at least five proteins: the Sec23/24 complex, the Sec13/31 complex and Sar1.

The protein resides in the cytoplasmic vesicle. It is found in the COPII-coated vesicle membrane. Its subcellular location is the endoplasmic reticulum membrane. The protein localises to the cytoplasm. It localises to the cytosol. Functionally, component of the coat protein complex II (COPII) which promotes the formation of transport vesicles from the endoplasmic reticulum (ER). The coat has two main functions, the physical deformation of the endoplasmic reticulum membrane into vesicles and the selection of cargo molecules for their transport to the Golgi complex. The polypeptide is Protein transport protein Sec23A (Danio rerio (Zebrafish)).